The primary structure comprises 272 residues: Putative UTP--glucose-1-phosphate uridylyltransferase (272 aa).

Belongs to the UDPGP type 2 family.

The catalysed reaction is alpha-D-glucose 1-phosphate + UTP + H(+) = UDP-alpha-D-glucose + diphosphate. This chain is Putative UTP--glucose-1-phosphate uridylyltransferase (ytdA), found in Bacillus subtilis (strain 168).